Consider the following 111-residue polypeptide: uncharacterized protein (111 aa).

This is an uncharacterized protein from Paracoccus denitrificans.